Consider the following 841-residue polypeptide: Translation initiation factor IF-2 (841 aa).

Residues 341–508 (NRAPVVTIMG…AILLQAEILE (168 aa)) enclose the tr-type G domain. The tract at residues 350-357 (GHVDHGKT) is G1. Position 350 to 357 (350 to 357 (GHVDHGKT)) interacts with GTP. The interval 375-379 (GITQC) is G2. A G3 region spans residues 396-399 (DTPG). Residues 396 to 400 (DTPGH) and 450 to 453 (NKID) contribute to the GTP site. Residues 450 to 453 (NKID) form a G4 region. A G5 region spans residues 486–488 (SAK).

The protein belongs to the TRAFAC class translation factor GTPase superfamily. Classic translation factor GTPase family. IF-2 subfamily.

It localises to the cytoplasm. In terms of biological role, one of the essential components for the initiation of protein synthesis. Protects formylmethionyl-tRNA from spontaneous hydrolysis and promotes its binding to the 30S ribosomal subunits. Also involved in the hydrolysis of GTP during the formation of the 70S ribosomal complex. This chain is Translation initiation factor IF-2, found in Wigglesworthia glossinidia brevipalpis.